Here is a 392-residue protein sequence, read N- to C-terminus: Cell division protein DivIB (392 aa).

Positions 1–88 (MSEKDNNLTP…TQSSEAPIEN (88 aa)) are disordered. Residues 1-131 (MSEKDNNLTP…KGSAPLLKKM (131 aa)) lie on the Cytoplasmic side of the membrane. A compositionally biased stretch (basic and acidic residues) spans 14 to 32 (KHLEYQKRKAEEAKKEKKA). Positions 58–76 (TRDEAESAELLEEGFETNN) are enriched in acidic residues. Residues 132 to 152 (WPALAVVVLVFVGSLYLISPL) form a helical membrane-spanning segment. Residues 153-224 (SKISTFSVSG…NRFEAIVKEH (72 aa)) form the POTRA domain. The Extracellular segment spans residues 153–392 (SKISTFSVSG…TAQSTTTSSN (240 aa)). The interval 368–392 (ISAQNAKKTDASSENTAQSTTTSSN) is disordered.

This sequence belongs to the FtsQ/DivIB family. DivIB subfamily.

It localises to the cell membrane. Its function is as follows. Cell division protein that may be involved in stabilizing or promoting the assembly of the division complex. The sequence is that of Cell division protein DivIB from Lactococcus lactis subsp. lactis (strain KF147).